The primary structure comprises 504 residues: DnaJ homolog subfamily C member 3 (504 aa).

Residues 1–31 (MVAPGSVRSRLGAVFPFLLVLVDLQYEGAEC) form the signal peptide. TPR repeat units follow at residues 37 to 70 (VEKH…DPDN), 72 to 104 (IAYY…KMDF), 105 to 138 (TAAR…NPSE), 154 to 187 (MQRL…CVWD), 188 to 221 (AELR…KNDN), 222 to 255 (TEAF…DQDH), 268 to 301 (LNKL…EPSV), 306 to 339 (VRSK…EPDN), and 340 to 373 (VNAL…NEND). An intrachain disulfide couples Cys-248 to Cys-258. Ser-274 bears the Phosphoserine mark. Cys-313 and Cys-329 are oxidised to a cystine. The flexible linker stretch occupies residues 375-393 (QIREGLEKAQRLLKQSQKR). The J domain occupies 394 to 462 (DYYKILGVKR…EMRRKFDDGE (69 aa)). Residues 451 to 481 (DPEMRRKFDDGEDPLDAETQQGGGSNPFHRS) are disordered. Phosphoserine is present on Ser-475.

As to quaternary structure, interacts with EIF2AK2 and EIF2AK3. Forms a trimeric complex with DNAJB1 and HSPA8. Interacts with THAP12.

Its subcellular location is the endoplasmic reticulum. Functionally, involved in the unfolded protein response (UPR) during ER stress. Co-chaperone of HSPA8/HSC70, it stimulates its ATPase activity. May inhibit both the autophosphorylation of EIF2AK2/PKR and the ability of EIF2AK2 to catalyze phosphorylation of the EIF2A. May inhibit EIF2AK3/PERK activity. The polypeptide is DnaJ homolog subfamily C member 3 (Dnajc3) (Rattus norvegicus (Rat)).